The sequence spans 268 residues: Embryonic abundant protein USP92 (268 aa).

An N-terminal signal peptide occupies residues 1–22 (MEFAHLTVLSLFCLAFVGITAT). Tandem repeats lie at residues 50–55 (GKTNSL), 83–88 (GNTNSV), 101–106 (GVTDSI), 166–183 (YVVE…MCHR), and 202–222 (YVVS…VCHH). The interval 50-106 (GKTNSLPIKSEELKQYSTLFFEHDLHPRKNFILGNTNSVGSIIRPFTKSRQGVTDSI) is 3 X 6 AA approximate repeats. The 192-residue stretch at 68-259 (LFFEHDLHPR…GNKAAAWVPN (192 aa)) folds into the BURP domain. Positions 166–222 (YVVEDVKKVGDNAVMCHRLNFEKVVFNCHQVRETTAYVVSLVASDGTKTKALTVCHH) are 2 X approximate repeats. N-linked (GlcNAc...) asparagine glycosylation is present at Asn259.

As to expression, seed.

The polypeptide is Embryonic abundant protein USP92 (Vicia faba (Broad bean)).